The following is a 745-amino-acid chain: Elongation factor G, mitochondrial (745 aa).

One can recognise a tr-type G domain in the interval 40-317; it reads ERIRNIGISA…AVLDYLPNPG (278 aa). Residues 49 to 56, 116 to 120, and 170 to 173 contribute to the GTP site; these read AHIDSGKT, DTPGH, and NKLD.

It belongs to the TRAFAC class translation factor GTPase superfamily. Classic translation factor GTPase family. EF-G/EF-2 subfamily.

Its subcellular location is the mitochondrion. The protein operates within protein biosynthesis; polypeptide chain elongation. Mitochondrial GTPase that catalyzes the GTP-dependent ribosomal translocation step during translation elongation. During this step, the ribosome changes from the pre-translocational (PRE) to the post-translocational (POST) state as the newly formed A-site-bound peptidyl-tRNA and P-site-bound deacylated tRNA move to the P and E sites, respectively. Catalyzes the coordinated movement of the two tRNA molecules, the mRNA and conformational changes in the ribosome. Essential during development as it acts as a retrograde signal from mitochondria to the nucleus to slow down cell proliferation if mitochondrial energy output is low. This chain is Elongation factor G, mitochondrial, found in Drosophila melanogaster (Fruit fly).